A 270-amino-acid polypeptide reads, in one-letter code: 3-phenylpropionate-dihydrodiol/cinnamic acid-dihydrodiol dehydrogenase (270 aa).

10–34 (FITGGGSGLGLALVERFIEEGAQVA) is a binding site for NAD(+). Ser143 lines the substrate pocket. Catalysis depends on Tyr156, which acts as the Proton acceptor.

Belongs to the short-chain dehydrogenases/reductases (SDR) family.

The enzyme catalyses 3-(cis-5,6-dihydroxycyclohexa-1,3-dien-1-yl)propanoate + NAD(+) = 3-(2,3-dihydroxyphenyl)propanoate + NADH + H(+). The catalysed reaction is (2E)-3-(cis-5,6-dihydroxycyclohexa-1,3-dien-1-yl)prop-2-enoate + NAD(+) = (2E)-3-(2,3-dihydroxyphenyl)prop-2-enoate + NADH + H(+). Its pathway is aromatic compound metabolism; 3-phenylpropanoate degradation. Converts 3-phenylpropionate-dihydrodiol (PP-dihydrodiol) and cinnamic acid-dihydrodiol (CI-dihydrodiol) into 3-(2,3-dihydroxylphenyl)propanoic acid (DHPP) and 2,3-dihydroxicinnamic acid (DHCI), respectively. The sequence is that of 3-phenylpropionate-dihydrodiol/cinnamic acid-dihydrodiol dehydrogenase from Shigella sonnei (strain Ss046).